Reading from the N-terminus, the 288-residue chain is Elongation factor Ts (288 aa).

Residues 79–82 (TDFV) form an involved in Mg(2+) ion dislocation from EF-Tu region.

The protein belongs to the EF-Ts family.

The protein localises to the cytoplasm. In terms of biological role, associates with the EF-Tu.GDP complex and induces the exchange of GDP to GTP. It remains bound to the aminoacyl-tRNA.EF-Tu.GTP complex up to the GTP hydrolysis stage on the ribosome. In Ehrlichia canis (strain Jake), this protein is Elongation factor Ts.